The sequence spans 221 residues: Endonuclease V (221 aa).

Mg(2+) is bound by residues Asp-43 and Asp-111.

It belongs to the endonuclease V family. It depends on Mg(2+) as a cofactor.

The protein resides in the cytoplasm. The catalysed reaction is Endonucleolytic cleavage at apurinic or apyrimidinic sites to products with a 5'-phosphate.. Its function is as follows. DNA repair enzyme involved in the repair of deaminated bases. Selectively cleaves double-stranded DNA at the second phosphodiester bond 3' to a deoxyinosine leaving behind the intact lesion on the nicked DNA. This is Endonuclease V from Azotobacter vinelandii (strain DJ / ATCC BAA-1303).